A 595-amino-acid polypeptide reads, in one-letter code: Inactive glycosyltransferase 25 family member 3 (595 aa).

An N-terminal signal peptide occupies residues 1 to 22 (MRAARAAPLLQLLLLLGPWLEA). N-linked (GlcNAc...) asparagine glycans are attached at residues Asn-75, Asn-153, Asn-237, and Asn-360. A disordered region spans residues 548–595 (DTETSSPWDDDSGRLISWSGSQKTLRSPRLDLTGSSGHSLQPQPRDEL). The segment covering 580–589 (TGSSGHSLQP) has biased composition (polar residues). A Prevents secretion from ER motif is present at residues 592–595 (RDEL).

The protein belongs to the glycosyltransferase 25 family. As to expression, ubiquitous. Highly expressed in secretory and nervous tissues.

The protein localises to the endoplasmic reticulum lumen. In terms of biological role, probable cell adhesion protein involved in leukocyte transmigration across the blood-brain barrier. Does not express any beta-galactosyltransferase activity in vitro. This Homo sapiens (Human) protein is Inactive glycosyltransferase 25 family member 3 (CERCAM).